We begin with the raw amino-acid sequence, 93 residues long: Small ribosomal subunit protein uS19 (93 aa).

Disordered stretches follow at residues 1 to 24 and 73 to 93; these read MPRS…AQNE and EFAP…GRRR. 2 stretches are compositionally biased toward basic and acidic residues: residues 9–21 and 81–93; these read PFVD…KVDA and KGHE…GRRR.

It belongs to the universal ribosomal protein uS19 family.

Its function is as follows. Protein S19 forms a complex with S13 that binds strongly to the 16S ribosomal RNA. The polypeptide is Small ribosomal subunit protein uS19 (Kineococcus radiotolerans (strain ATCC BAA-149 / DSM 14245 / SRS30216)).